The primary structure comprises 470 residues: Neuraminidase (470 aa).

Topologically, residues 1–14 are intravirion; sequence MNPNQKIITIGSAS. Positions 11–32 are involved in apical transport and lipid raft association; the sequence is GSASLGILILNVILHVVSIIVT. The helical transmembrane segment at 15–35 threads the bilayer; the sequence is LGILILNVILHVVSIIVTVLV. The interval 32–86 is hypervariable stalk region; it reads TVLVLNNNGTGLNCNGTIIREYNETVRVERVIQWYNTNTIEYIERPSNEYYMNNT. The Virion surface segment spans residues 36-470; the sequence is LNNNGTGLNC…AILPFDIDKM (435 aa). 4 N-linked (GlcNAc...) asparagine; by host glycosylation sites follow: Asn-39, Asn-46, Asn-54, and Asn-84. The tract at residues 89–470 is head of neuraminidase; that stretch reads LCEAQGFAPF…AILPFDIDKM (382 aa). Disulfide bonds link Cys-90-Cys-417, Cys-122-Cys-127, Cys-182-Cys-229, Cys-231-Cys-236, Cys-277-Cys-290, Cys-279-Cys-288, Cys-316-Cys-335, and Cys-421-Cys-446. Residue Arg-116 participates in substrate binding. Asn-144 is a glycosylation site (N-linked (GlcNAc...) asparagine; by host). The Proton donor/acceptor role is filled by Asp-149. Arg-150 contributes to the substrate binding site. 275–276 contributes to the substrate binding site; that stretch reads EE. Arg-291 lines the substrate pocket. Asp-292 lines the Ca(2+) pocket. A glycan (N-linked (GlcNAc...) asparagine; by host) is linked at Asn-293. Residues Gly-296 and Asp-322 each coordinate Ca(2+). Residue Arg-368 coordinates substrate. An N-linked (GlcNAc...) asparagine; by host glycan is attached at Asn-398. Residue Tyr-402 is the Nucleophile of the active site.

It belongs to the glycosyl hydrolase 34 family. Homotetramer. The cofactor is Ca(2+). N-glycosylated.

The protein localises to the virion membrane. It localises to the host apical cell membrane. It catalyses the reaction Hydrolysis of alpha-(2-&gt;3)-, alpha-(2-&gt;6)-, alpha-(2-&gt;8)- glycosidic linkages of terminal sialic acid residues in oligosaccharides, glycoproteins, glycolipids, colominic acid and synthetic substrates.. Inhibited by the neuraminidase inhibitors zanamivir (Relenza) and oseltamivir (Tamiflu). These drugs interfere with the release of progeny virus from infected cells and are effective against all influenza strains. Resistance to neuraminidase inhibitors is quite rare. Catalyzes the removal of terminal sialic acid residues from viral and cellular glycoconjugates. Cleaves off the terminal sialic acids on the glycosylated HA during virus budding to facilitate virus release. Additionally helps virus spread through the circulation by further removing sialic acids from the cell surface. These cleavages prevent self-aggregation and ensure the efficient spread of the progeny virus from cell to cell. Otherwise, infection would be limited to one round of replication. Described as a receptor-destroying enzyme because it cleaves a terminal sialic acid from the cellular receptors. May facilitate viral invasion of the upper airways by cleaving the sialic acid moieties on the mucin of the airway epithelial cells. Likely to plays a role in the budding process through its association with lipid rafts during intracellular transport. May additionally display a raft-association independent effect on budding. Plays a role in the determination of host range restriction on replication and virulence. Sialidase activity in late endosome/lysosome traffic seems to enhance virus replication. This Influenza A virus (strain A/Equine/Santiago/1/1985 H3N8) protein is Neuraminidase.